The sequence spans 98 residues: RING finger protein Z (98 aa).

The segment covering 1–10 (MGNTKTKDRQ) has biased composition (basic and acidic residues). The disordered stretch occupies residues 1–26 (MGNTKTKDRQYQSNSSQPTNTSAPVL). The N-myristoyl glycine; by host moiety is linked to residue G2. Residues 11-23 (YQSNSSQPTNTSA) are compositionally biased toward polar residues. The RING-type; atypical zinc finger occupies 41-77 (CRCCWFADTNLVNCSNHYLCLKCLNTMLRRSNLCDIC). The PTAP/PSAP motif signature appears at 91–94 (PSAP).

It belongs to the arenaviridae Z protein family. As to quaternary structure, interacts with protein NP; this interaction probably directs the encapsidated genome to budding sites. Interacts (via RING domain) with polymerase L; this interaction inhibits viral transcription and replication, Z partially blocks the product exit tunnel for the releasing nascent RNA product. Interacts with the glycoprotein complex; this interaction plays a role in virion budding. Interacts with host eIF4E; this interaction results in eIF4E reduced affinity for its substrate, the 5'-m7 G cap structure. Interacts (via late-budding domain) with host TSG101; this interaction is essential for budding and release of viral particles. Interacts with host RPLP0; this interaction may serve to load ribosome-like particles inside the virion. Interacts with host PML; this interaction induces PML bodies redistribution in the cytoplasm upon viral infection. Myristoylation is required for the role of RING finger protein Z in assembly and budding.

It is found in the virion. The protein localises to the host cytoplasm. The protein resides in the host perinuclear region. It localises to the host cell membrane. Its function is as follows. Plays a crucial role in virion assembly and budding. Expressed late in the virus life cycle, it acts as an inhibitor of viral transcription and RNA synthesis by interacting with the viral polymerase L. Presumably recruits the NP encapsidated genome to cellular membranes at budding sites via direct interaction with NP. Plays critical roles in the final steps of viral release by interacting with host TSG101, a member of the vacuolar protein-sorting pathway and using other cellular host proteins involved in vesicle formation pathway. The budding of the virus progeny occurs after association of protein Z with the viral glycoprotein complex SSP-GP1-GP2 at the cell periphery, step that requires myristoylation of protein Z. Also selectively represses protein production by associating with host eIF4E. In cell-based minigenome assay, has an inhibitory effect on the ribonucleoprotein machinery (vRNP), which is responsible for the replication and transcription of the viral genome. This is RING finger protein Z from Chapare mammarenavirus (isolate Human/Bolivia/810419/2003).